Consider the following 192-residue polypeptide: GTP cyclohydrolase-2 (192 aa).

Position 50-54 (50-54) interacts with GTP; sequence RLHSE. Zn(2+)-binding residues include Cys-55, Cys-66, and Cys-68. GTP-binding positions include 92 to 94 and Thr-114; that span reads EGR. Asp-126 acts as the Proton acceptor in catalysis. Arg-128 (nucleophile) is an active-site residue. GTP is bound by residues Thr-149 and Lys-154.

Belongs to the GTP cyclohydrolase II family. Zn(2+) serves as cofactor.

It catalyses the reaction GTP + 4 H2O = 2,5-diamino-6-hydroxy-4-(5-phosphoribosylamino)-pyrimidine + formate + 2 phosphate + 3 H(+). The protein operates within cofactor biosynthesis; riboflavin biosynthesis; 5-amino-6-(D-ribitylamino)uracil from GTP: step 1/4. In terms of biological role, catalyzes the conversion of GTP to 2,5-diamino-6-ribosylamino-4(3H)-pyrimidinone 5'-phosphate (DARP), formate and pyrophosphate. The sequence is that of GTP cyclohydrolase-2 from Helicobacter acinonychis (strain Sheeba).